Consider the following 658-residue polypeptide: Threonine--tRNA ligase (658 aa).

A TGS domain is found at 1–61 (MIELVFPDGS…EKGGAFKILT (61 aa)). Residues 243 to 535 (DHRKLGRQMD…LIENYAGAFP (293 aa)) are catalytic. Zn(2+)-binding residues include C335, H386, and H512.

The protein belongs to the class-II aminoacyl-tRNA synthetase family. As to quaternary structure, homodimer. The cofactor is Zn(2+).

Its subcellular location is the cytoplasm. It carries out the reaction tRNA(Thr) + L-threonine + ATP = L-threonyl-tRNA(Thr) + AMP + diphosphate + H(+). Functionally, catalyzes the attachment of threonine to tRNA(Thr) in a two-step reaction: L-threonine is first activated by ATP to form Thr-AMP and then transferred to the acceptor end of tRNA(Thr). Also edits incorrectly charged L-seryl-tRNA(Thr). This Phenylobacterium zucineum (strain HLK1) protein is Threonine--tRNA ligase.